Here is a 175-residue protein sequence, read N- to C-terminus: Austinoid biosynthesis cluster protein F (175 aa).

Belongs to the trt14 isomerase family. As to quaternary structure, homodimer.

It participates in secondary metabolite biosynthesis; terpenoid biosynthesis. Part of the gene cluster that mediates the biosynthesis of calidodehydroaustin, a fungal meroterpenoid. The first step of the pathway is the synthesis of 3,5-dimethylorsellinic acid by the polyketide synthase ausA. 3,5-dimethylorsellinic acid is then prenylated by the polyprenyl transferase ausN. Further epoxidation by the FAD-dependent monooxygenase ausM and cyclization by the probable terpene cyclase ausL lead to the formation of protoaustinoid A. Protoaustinoid A is then oxidized to spiro-lactone preaustinoid A3 by the combined action of the FAD-binding monooxygenases ausB and ausC, and the dioxygenase ausE. Acid-catalyzed keto-rearrangement and ring contraction of the tetraketide portion of preaustinoid A3 by ausJ lead to the formation of preaustinoid A4. The aldo-keto reductase ausK, with the help of ausH, is involved in the next step by transforming preaustinoid A4 into isoaustinone which is in turn hydroxylated by the P450 monooxygenase ausI to form austinolide. The cytochrome P450 monooxygenase ausG modifies austinolide to austinol. Austinol is further acetylated to austin by the O-acetyltransferase ausP, which spontaneously changes to dehydroaustin. The cytochrome P450 monooxygenase ausR then converts dehydroaustin is into 7-dehydrodehydroaustin. The hydroxylation catalyzed by ausR permits the O-acetyltransferase ausQ to add an additional acetyl group to the molecule, leading to the formation of acetoxydehydroaustin. The short chain dehydrogenase ausT catalyzes the reduction of the double bond present between carbon atoms 1 and 2 to convert 7-dehydrodehydroaustin into 1,2-dihydro-7-hydroxydehydroaustin. AusQ catalyzes not only an acetylation reaction but also the addition of the PKS ausV diketide product to 1,2-dihydro-7-hydroxydehydroaustin, forming precalidodehydroaustin. Finally, the iron/alpha-ketoglutarate-dependent dioxygenase converts precalidodehydroaustin into calidodehydroaustin. This Aspergillus calidoustus protein is Austinoid biosynthesis cluster protein F.